The chain runs to 505 residues: 2,3-bisphosphoglycerate-independent phosphoglycerate mutase (505 aa).

Residues aspartate 12 and serine 62 each coordinate Mn(2+). Residue serine 62 is the Phosphoserine intermediate of the active site. Residues histidine 123, 153–154, arginine 185, arginine 191, 257–260, and lysine 330 contribute to the substrate site; these read RD and RPDR. Positions 397, 401, 438, 439, and 456 each coordinate Mn(2+).

This sequence belongs to the BPG-independent phosphoglycerate mutase family. Monomer. The cofactor is Mn(2+).

The catalysed reaction is (2R)-2-phosphoglycerate = (2R)-3-phosphoglycerate. The protein operates within carbohydrate degradation; glycolysis; pyruvate from D-glyceraldehyde 3-phosphate: step 3/5. In terms of biological role, catalyzes the interconversion of 2-phosphoglycerate and 3-phosphoglycerate. The polypeptide is 2,3-bisphosphoglycerate-independent phosphoglycerate mutase (Staphylococcus epidermidis (strain ATCC 35984 / DSM 28319 / BCRC 17069 / CCUG 31568 / BM 3577 / RP62A)).